Here is a 469-residue protein sequence, read N- to C-terminus: Argininosuccinate lyase (469 aa).

The protein belongs to the lyase 1 family. Argininosuccinate lyase subfamily.

The protein resides in the cytoplasm. It catalyses the reaction 2-(N(omega)-L-arginino)succinate = fumarate + L-arginine. It participates in amino-acid biosynthesis; L-arginine biosynthesis; L-arginine from L-ornithine and carbamoyl phosphate: step 3/3. This Novosphingobium aromaticivorans (strain ATCC 700278 / DSM 12444 / CCUG 56034 / CIP 105152 / NBRC 16084 / F199) protein is Argininosuccinate lyase.